The primary structure comprises 150 residues: Snaclec 7 (150 aa).

Positions 1–23 are cleaved as a signal peptide; the sequence is MGRFISISFGLLVVFLSLSGTGA. Cystine bridges form between Cys27–Cys38, Cys55–Cys144, and Cys121–Cys136. Positions 34-145 constitute a C-type lectin domain; that stretch reads YEGYCYKVFN…CNDPRYFVCK (112 aa).

It belongs to the snaclec family. In terms of assembly, heterodimer; disulfide-linked.

It is found in the secreted. Interferes with one step of hemostasis (modulation of platelet aggregation, or coagulation cascade, for example). This is Snaclec 7 from Daboia siamensis (Eastern Russel's viper).